A 121-amino-acid polypeptide reads, in one-letter code: Small ribosomal subunit protein eS24 (121 aa).

The protein belongs to the eukaryotic ribosomal protein eS24 family.

In Pyrobaculum arsenaticum (strain DSM 13514 / JCM 11321 / PZ6), this protein is Small ribosomal subunit protein eS24.